Consider the following 66-residue polypeptide: Large ribosomal subunit protein uL29 (66 aa).

It belongs to the universal ribosomal protein uL29 family.

In Nitrosococcus oceani (strain ATCC 19707 / BCRC 17464 / JCM 30415 / NCIMB 11848 / C-107), this protein is Large ribosomal subunit protein uL29.